The sequence spans 704 residues: Elongation factor G (704 aa).

The 284-residue stretch at 8 to 291 (DKVRNIGIMA…TVVECLPSPV (284 aa)) folds into the tr-type G domain. Residues 17 to 24 (AHIDAGKT), 90 to 94 (DTPGH), and 144 to 147 (NKMD) contribute to the GTP site.

This sequence belongs to the TRAFAC class translation factor GTPase superfamily. Classic translation factor GTPase family. EF-G/EF-2 subfamily.

The protein localises to the cytoplasm. Catalyzes the GTP-dependent ribosomal translocation step during translation elongation. During this step, the ribosome changes from the pre-translocational (PRE) to the post-translocational (POST) state as the newly formed A-site-bound peptidyl-tRNA and P-site-bound deacylated tRNA move to the P and E sites, respectively. Catalyzes the coordinated movement of the two tRNA molecules, the mRNA and conformational changes in the ribosome. In Prosthecochloris aestuarii (strain DSM 271 / SK 413), this protein is Elongation factor G.